Here is a 501-residue protein sequence, read N- to C-terminus: Lysine--tRNA ligase (501 aa).

Mg(2+) is bound by residues E412 and E419.

It belongs to the class-II aminoacyl-tRNA synthetase family. In terms of assembly, homodimer. Mg(2+) is required as a cofactor.

It is found in the cytoplasm. The enzyme catalyses tRNA(Lys) + L-lysine + ATP = L-lysyl-tRNA(Lys) + AMP + diphosphate. This Chlorobium luteolum (strain DSM 273 / BCRC 81028 / 2530) (Pelodictyon luteolum) protein is Lysine--tRNA ligase.